We begin with the raw amino-acid sequence, 217 residues long: Probable transaldolase (217 aa).

The active-site Schiff-base intermediate with substrate is lysine 83.

It belongs to the transaldolase family. Type 3B subfamily.

The protein localises to the cytoplasm. The enzyme catalyses D-sedoheptulose 7-phosphate + D-glyceraldehyde 3-phosphate = D-erythrose 4-phosphate + beta-D-fructose 6-phosphate. It participates in carbohydrate degradation; pentose phosphate pathway; D-glyceraldehyde 3-phosphate and beta-D-fructose 6-phosphate from D-ribose 5-phosphate and D-xylulose 5-phosphate (non-oxidative stage): step 2/3. Functionally, transaldolase is important for the balance of metabolites in the pentose-phosphate pathway. This chain is Probable transaldolase, found in Ruegeria sp. (strain TM1040) (Silicibacter sp.).